The primary structure comprises 56 residues: MAVQQNKKSRSKRGMRRSHDSLSTAQLSVDATSGELHRRHNVTADGFYRGVKVINK.

The disordered stretch occupies residues 1 to 38; it reads MAVQQNKKSRSKRGMRRSHDSLSTAQLSVDATSGELHR. Basic residues predominate over residues 7 to 16; it reads KKSRSKRGMR. Residues 21–31 are compositionally biased toward polar residues; that stretch reads SLSTAQLSVDA.

The protein belongs to the bacterial ribosomal protein bL32 family.

This is Large ribosomal subunit protein bL32 from Shewanella woodyi (strain ATCC 51908 / MS32).